The primary structure comprises 639 residues: MIRITLPDNSQREYAGPVSVADVAQSIGPGLAKMTVAGKVDGRLVDASDVIDHDARLQIITPWDQEGVEIIRHSCAHLVGHAVKQLYPTAKMVIGPVIEEGFYYDIAYERPFTPEDLAAIEQRMKELIAQDYDVVKKMTPRDEVIQVFRERGEEYKLRLVEDMPDEKAMGLYYHQEYVDMCRGPHVPNTRFLKVFKLTRVSGAYWRGDARNEQLQRIYGTAWADKKDLEAYVKRIEEAEKRDHRRLGRELDLFHIDEHSPGTVFWHPKGWTIWQGVEQYMRQVYRDNGYQEVKGPQILDKHLWEKTGHWDKYRENMFTTESEKHDYALKPMNCPGHILIFNQGVKSYRDLPLRYGEFGQCHRNEPTGGLHGIMRVRAFTQDDGHIFCTEDQIQQECINFTALLQKVYKDFGFTDIIYKVATRPEKRIGSEESWDKAENALIESLKASGCDYQIAVGDGAFYGPKLEYTLRDAIGRHWQCGTIQVDPSMPERLGAEYVGEDGQRHRPIVLHRAIVGSLERFIGILIEQHAGALPVWLAPVQVAVLNITGAQDDYCREIAAKLQKALPNQGLRVELDLRNEKITYKIREHSLQKLPYILVVGDKEKAAGAVAVRARGNRDLGVMPLEAFISLIGQDIADKV.

The TGS domain occupies 1 to 61 (MIRITLPDNS…DHDARLQIIT (61 aa)). Positions 242–533 (DHRRLGRELD…LIEQHAGALP (292 aa)) are catalytic. The Zn(2+) site is built by Cys333, His384, and His510.

This sequence belongs to the class-II aminoacyl-tRNA synthetase family. In terms of assembly, homodimer. Zn(2+) is required as a cofactor.

It is found in the cytoplasm. The catalysed reaction is tRNA(Thr) + L-threonine + ATP = L-threonyl-tRNA(Thr) + AMP + diphosphate + H(+). Its function is as follows. Catalyzes the attachment of threonine to tRNA(Thr) in a two-step reaction: L-threonine is first activated by ATP to form Thr-AMP and then transferred to the acceptor end of tRNA(Thr). Also edits incorrectly charged L-seryl-tRNA(Thr). The protein is Threonine--tRNA ligase of Paracidovorax citrulli (strain AAC00-1) (Acidovorax citrulli).